The primary structure comprises 170 residues: IMPACT family member YDL177C (170 aa).

A disordered region spans residues 79-98 (KKKGNKANKSNNSHVNKSRN).

This sequence belongs to the IMPACT family.

The polypeptide is IMPACT family member YDL177C (Saccharomyces cerevisiae (strain ATCC 204508 / S288c) (Baker's yeast)).